The chain runs to 35 residues: Photosystem II reaction center protein M (35 aa).

A helical transmembrane segment spans residues 7 to 27; sequence GFIATILFVLVPTVFLLILYI.

Belongs to the PsbM family. PSII is composed of 1 copy each of membrane proteins PsbA, PsbB, PsbC, PsbD, PsbE, PsbF, PsbH, PsbI, PsbJ, PsbK, PsbL, PsbM, PsbT, PsbX, PsbY, PsbZ, Psb30/Ycf12, peripheral proteins PsbO, CyanoQ (PsbQ), PsbU, PsbV and a large number of cofactors. It forms dimeric complexes.

The protein localises to the cellular thylakoid membrane. In terms of biological role, one of the components of the core complex of photosystem II (PSII). PSII is a light-driven water:plastoquinone oxidoreductase that uses light energy to abstract electrons from H(2)O, generating O(2) and a proton gradient subsequently used for ATP formation. It consists of a core antenna complex that captures photons, and an electron transfer chain that converts photonic excitation into a charge separation. This subunit is found at the monomer-monomer interface. The sequence is that of Photosystem II reaction center protein M from Gloeothece citriformis (strain PCC 7424) (Cyanothece sp. (strain PCC 7424)).